Reading from the N-terminus, the 80-residue chain is MVRIRLARGGHKKTPFYHIVITDSRSARDGRFIERVGFFSPIKFSNRTGLGLRVNLERVKYWLYKGASPSDRVLKLIKNL.

The protein belongs to the bacterial ribosomal protein bS16 family.

The polypeptide is Small ribosomal subunit protein bS16 (Blochmanniella pennsylvanica (strain BPEN)).